The primary structure comprises 126 residues: UPF0538 protein C2orf76 homolog (126 aa).

This sequence belongs to the UPF0538 family.

The polypeptide is UPF0538 protein C2orf76 homolog (Mus musculus (Mouse)).